The sequence spans 233 residues: Large ribosomal subunit protein uL1 (233 aa).

The protein belongs to the universal ribosomal protein uL1 family. Part of the 50S ribosomal subunit.

Binds directly to 23S rRNA. The L1 stalk is quite mobile in the ribosome, and is involved in E site tRNA release. In terms of biological role, protein L1 is also a translational repressor protein, it controls the translation of the L11 operon by binding to its mRNA. This chain is Large ribosomal subunit protein uL1, found in Thermotoga sp. (strain RQ2).